Reading from the N-terminus, the 225-residue chain is Biosynthetic peptidoglycan transglycosylase (225 aa).

A helical membrane pass occupies residues Ser7 to Val27.

Belongs to the glycosyltransferase 51 family.

Its subcellular location is the cell inner membrane. It catalyses the reaction [GlcNAc-(1-&gt;4)-Mur2Ac(oyl-L-Ala-gamma-D-Glu-L-Lys-D-Ala-D-Ala)](n)-di-trans,octa-cis-undecaprenyl diphosphate + beta-D-GlcNAc-(1-&gt;4)-Mur2Ac(oyl-L-Ala-gamma-D-Glu-L-Lys-D-Ala-D-Ala)-di-trans,octa-cis-undecaprenyl diphosphate = [GlcNAc-(1-&gt;4)-Mur2Ac(oyl-L-Ala-gamma-D-Glu-L-Lys-D-Ala-D-Ala)](n+1)-di-trans,octa-cis-undecaprenyl diphosphate + di-trans,octa-cis-undecaprenyl diphosphate + H(+). Its pathway is cell wall biogenesis; peptidoglycan biosynthesis. Functionally, peptidoglycan polymerase that catalyzes glycan chain elongation from lipid-linked precursors. This is Biosynthetic peptidoglycan transglycosylase from Vibrio parahaemolyticus serotype O3:K6 (strain RIMD 2210633).